The chain runs to 429 residues: Enolase (429 aa).

Q164 is a (2R)-2-phosphoglycerate binding site. E206 acts as the Proton donor in catalysis. D243, E286, and D313 together coordinate Mg(2+). Residues K338, R367, S368, and K389 each coordinate (2R)-2-phosphoglycerate. K338 serves as the catalytic Proton acceptor.

This sequence belongs to the enolase family. It depends on Mg(2+) as a cofactor.

The protein resides in the cytoplasm. It localises to the secreted. It is found in the cell surface. The enzyme catalyses (2R)-2-phosphoglycerate = phosphoenolpyruvate + H2O. Its pathway is carbohydrate degradation; glycolysis; pyruvate from D-glyceraldehyde 3-phosphate: step 4/5. Functionally, catalyzes the reversible conversion of 2-phosphoglycerate (2-PG) into phosphoenolpyruvate (PEP). It is essential for the degradation of carbohydrates via glycolysis. The sequence is that of Enolase from Thermotoga sp. (strain RQ2).